Reading from the N-terminus, the 812-residue chain is Phospholipase D alpha 1 (812 aa).

A propeptide spanning residues 1-46 (MAQMLLHGTLHATIFEAASLSNPHRASGSAPKFIRKFVEGIEDTVG) is cleaved from the precursor. In terms of domain architecture, C2 spans 1 to 130 (MAQMLLHGTL…LNGEEIDRWL (130 aa)). Residue D190 coordinates Ca(2+). The PLD phosphodiesterase 1 domain occupies 330 to 368 (TMFTHHQKIVVVDHELPNQGSQQRRIVSFVGGLDLCDGR). Active-site residues include H335, K337, and D342. H335 is an a 1,2-diacyl-sn-glycero-3-phosphate binding site. Positions 374 and 408 each coordinate Ca(2+). The a 1,2-diacyl-sn-glycero-3-phosphate site is built by Q524 and H663. One can recognise a PLD phosphodiesterase 2 domain in the interval 658-685 (FMIYVHTKMMIVDDEYIIIGSANINQRS). Catalysis depends on residues H663, K665, and D670. E724 serves as a coordination point for Ca(2+).

Belongs to the phospholipase D family. C2-PLD subfamily. In terms of assembly, monomer. Ca(2+) serves as cofactor. As to expression, expressed in leaves, roots, developing seeds and cultured cells.

It carries out the reaction a 1,2-diacyl-sn-glycero-3-phosphocholine + H2O = a 1,2-diacyl-sn-glycero-3-phosphate + choline + H(+). Its function is as follows. Hydrolyzes glycerol-phospholipids at the terminal phosphodiesteric bond. Plays an important role in various cellular processes. The sequence is that of Phospholipase D alpha 1 (PLD1) from Oryza sativa subsp. japonica (Rice).